The sequence spans 206 residues: Ribosomal RNA small subunit methyltransferase G (206 aa).

Residues Gly-73, Leu-78, 124–125 (VE), and Arg-139 each bind S-adenosyl-L-methionine.

It belongs to the methyltransferase superfamily. RNA methyltransferase RsmG family.

The protein localises to the cytoplasm. It catalyses the reaction guanosine(527) in 16S rRNA + S-adenosyl-L-methionine = N(7)-methylguanosine(527) in 16S rRNA + S-adenosyl-L-homocysteine. Specifically methylates the N7 position of guanine in position 527 of 16S rRNA. In Photobacterium profundum (strain SS9), this protein is Ribosomal RNA small subunit methyltransferase G.